Consider the following 464-residue polypeptide: MTAQLSKKGEAWSARFNEPVSDLVKRYTASVFFDKRLAQVDIQGSLAHAEMLAHQNIISQEDHAEIRRGMAQILEEITAGKFEWLLDLEDVHLNIEKRLTELVGDAGKRLHTGRSRNDQVATDIRLYVRSEIDNIVGLLRDLRLALLDLAEQHADTILPGFTHMQVAQPITFGHHMLAYVEMFSRDAERMQDCRKRVNRLPLGAAALAGTTFPIDRERVAKTLGFDDVCHNSLDAVSDRDFAIEFCAAAALIMTHVSRMSEELVIWMSPRIGFIDIADRFCTGSSIMPQKKNPDVPELARGKTGRVNGHLIALLTLMKGQPLAYNKDNQEDKEPLFDTVDTVVDTLRIFADMATGITVKPDAMRAAALQGYATATDLADYLVKKGLPFRDAHEAVAHAVRACVDRGIDLSDLTLEEMQAFSKLIEADIFAVLTLEGSVAARNHVGGTAPQQVRAAIARHRAKLA.

Belongs to the lyase 1 family. Argininosuccinate lyase subfamily.

Its subcellular location is the cytoplasm. It catalyses the reaction 2-(N(omega)-L-arginino)succinate = fumarate + L-arginine. It participates in amino-acid biosynthesis; L-arginine biosynthesis; L-arginine from L-ornithine and carbamoyl phosphate: step 3/3. This Herminiimonas arsenicoxydans protein is Argininosuccinate lyase.